We begin with the raw amino-acid sequence, 316 residues long: N-acetyl-gamma-glutamyl-phosphate reductase (316 aa).

Cys136 is a catalytic residue.

It belongs to the NAGSA dehydrogenase family. Type 1 subfamily.

The protein localises to the cytoplasm. The enzyme catalyses N-acetyl-L-glutamate 5-semialdehyde + phosphate + NADP(+) = N-acetyl-L-glutamyl 5-phosphate + NADPH + H(+). It functions in the pathway amino-acid biosynthesis; L-arginine biosynthesis; N(2)-acetyl-L-ornithine from L-glutamate: step 3/4. Catalyzes the NADPH-dependent reduction of N-acetyl-5-glutamyl phosphate to yield N-acetyl-L-glutamate 5-semialdehyde. This Xanthomonas campestris pv. campestris (strain ATCC 33913 / DSM 3586 / NCPPB 528 / LMG 568 / P 25) protein is N-acetyl-gamma-glutamyl-phosphate reductase.